We begin with the raw amino-acid sequence, 349 residues long: GTP 3',8-cyclase (349 aa).

The Radical SAM core domain occupies 24–250 (PFGRAVTYLR…DIPYRTGGPA (227 aa)). Arg-33 is a binding site for GTP. Residues Cys-40 and Cys-44 each coordinate [4Fe-4S] cluster. Tyr-46 provides a ligand contact to S-adenosyl-L-methionine. Cys-47 lines the [4Fe-4S] cluster pocket. Position 82 (Arg-82) interacts with GTP. Residue Gly-86 participates in S-adenosyl-L-methionine binding. GTP is bound at residue Thr-116. Ser-140 serves as a coordination point for S-adenosyl-L-methionine. Lys-176 provides a ligand contact to GTP. Residue Met-210 coordinates S-adenosyl-L-methionine. Cys-273 and Cys-276 together coordinate [4Fe-4S] cluster. A GTP-binding site is contributed by 278–280 (RVR). Residue Cys-290 coordinates [4Fe-4S] cluster.

It belongs to the radical SAM superfamily. MoaA family. Monomer and homodimer. The cofactor is [4Fe-4S] cluster.

The catalysed reaction is GTP + AH2 + S-adenosyl-L-methionine = (8S)-3',8-cyclo-7,8-dihydroguanosine 5'-triphosphate + 5'-deoxyadenosine + L-methionine + A + H(+). Its pathway is cofactor biosynthesis; molybdopterin biosynthesis. Functionally, catalyzes the cyclization of GTP to (8S)-3',8-cyclo-7,8-dihydroguanosine 5'-triphosphate. This Rhizobium meliloti (strain 1021) (Ensifer meliloti) protein is GTP 3',8-cyclase.